Reading from the N-terminus, the 340-residue chain is Phenylalanine--tRNA ligase alpha subunit (340 aa).

Residue E255 participates in Mg(2+) binding.

This sequence belongs to the class-II aminoacyl-tRNA synthetase family. Phe-tRNA synthetase alpha subunit type 1 subfamily. In terms of assembly, tetramer of two alpha and two beta subunits. Mg(2+) is required as a cofactor.

It is found in the cytoplasm. The catalysed reaction is tRNA(Phe) + L-phenylalanine + ATP = L-phenylalanyl-tRNA(Phe) + AMP + diphosphate + H(+). The polypeptide is Phenylalanine--tRNA ligase alpha subunit (Desulfitobacterium hafniense (strain Y51)).